Reading from the N-terminus, the 370-residue chain is DNA primase large subunit PriL (370 aa).

[4Fe-4S] cluster contacts are provided by cysteine 268, cysteine 341, cysteine 350, and cysteine 354.

The protein belongs to the eukaryotic-type primase large subunit family. As to quaternary structure, heterodimer of a small subunit (PriS) and a large subunit (PriL). [4Fe-4S] cluster is required as a cofactor.

In terms of biological role, regulatory subunit of DNA primase, an RNA polymerase that catalyzes the synthesis of short RNA molecules used as primers for DNA polymerase during DNA replication. Stabilizes and modulates the activity of the small subunit, increasing the rate of DNA synthesis, and conferring RNA synthesis capability. The DNA polymerase activity may enable DNA primase to also catalyze primer extension after primer synthesis. May also play a role in DNA repair. This Archaeoglobus fulgidus (strain ATCC 49558 / DSM 4304 / JCM 9628 / NBRC 100126 / VC-16) protein is DNA primase large subunit PriL.